Consider the following 216-residue polypeptide: Large ribosomal subunit protein uL1 (216 aa).

This sequence belongs to the universal ribosomal protein uL1 family. Component of the large ribosomal subunit.

Its subcellular location is the cytoplasm. Component of the large ribosomal subunit. The ribosome is a large ribonucleoprotein complex responsible for the synthesis of proteins in the cell. This chain is Large ribosomal subunit protein uL1 (rpl10a), found in Ictalurus punctatus (Channel catfish).